A 570-amino-acid polypeptide reads, in one-letter code: Urease subunit alpha (570 aa).

One can recognise a Urease domain in the interval glycine 132 to phenylalanine 570. Histidine 137, histidine 139, and lysine 220 together coordinate Ni(2+). At lysine 220 the chain carries N6-carboxylysine. Position 222 (histidine 222) interacts with substrate. Positions 249 and 275 each coordinate Ni(2+). Residue histidine 323 is the Proton donor of the active site. Aspartate 363 is a binding site for Ni(2+).

The protein belongs to the metallo-dependent hydrolases superfamily. Urease alpha subunit family. As to quaternary structure, heterotrimer of UreA (gamma), UreB (beta) and UreC (alpha) subunits. Three heterotrimers associate to form the active enzyme. Requires Ni cation as cofactor. In terms of processing, carboxylation allows a single lysine to coordinate two nickel ions.

It is found in the cytoplasm. It catalyses the reaction urea + 2 H2O + H(+) = hydrogencarbonate + 2 NH4(+). It functions in the pathway nitrogen metabolism; urea degradation; CO(2) and NH(3) from urea (urease route): step 1/1. This chain is Urease subunit alpha, found in Corynebacterium glutamicum (strain ATCC 13032 / DSM 20300 / JCM 1318 / BCRC 11384 / CCUG 27702 / LMG 3730 / NBRC 12168 / NCIMB 10025 / NRRL B-2784 / 534).